A 417-amino-acid polypeptide reads, in one-letter code: Phosphoglycerate kinase 1 (417 aa).

The residue at position 2 (S2) is an N-acetylserine. Residues S2 and S4 each carry the phosphoserine modification. A globular domain-1 region spans residues 2–186 (SLSNKLTLDK…VGVNLPQKAG (185 aa)). K6 is subject to N6-succinyllysine. K11 carries the N6-acetyllysine modification. 6 residues coordinate (2R)-3-phosphoglycerate: V23, D24, F25, N26, Q38, and R39. A mitochondrial targeting region exposed following cis-trans isomerization by PIN1 and recognized by the TOM complex for mitochondrial translocation of the protein region spans residues 38–43 (QRIKAA). K48 bears the N6-acetyllysine; alternate mark. K48 carries the post-translational modification N6-succinyllysine; alternate. Positions 62, 63, 65, and 66 each coordinate (2R)-3-phosphoglycerate. Position 75 is an N6-acetyllysine (K75). Position 76 is a phosphotyrosine (Y76). An N6-acetyllysine mark is found at K86 and K91. N6-acetyllysine; alternate is present on K97. K97 is modified (N6-(2-hydroxyisobutyryl)lysine; alternate). (2R)-3-phosphoglycerate is bound by residues L122 and R123. K131 bears the N6-acetyllysine; alternate mark. The residue at position 131 (K131) is an N6-malonyllysine; alternate. An N6-acetyllysine modification is found at K146. Residues H170 and R171 each contribute to the (2R)-3-phosphoglycerate site. The interval 187–190 (GFLM) is linker. An N6-succinyllysine modification is found at K191. The globular domain-2 stretch occupies residues 191–417 (KKELNYFAKA…LPGVDALSNV (227 aa)). Y196 carries the phosphotyrosine modification. At K199 the chain carries N6-acetyllysine. S203 bears the Phosphoserine mark. G214 lines the ADP pocket. G214 lines the CDP pocket. Positions 215 and 216 each coordinate AMP. Residue A215 coordinates ATP. A215 lines the Mg(2+) pocket. Position 216 is an N6-(2-hydroxyisobutyryl)lysine (K216). Mg(2+) contacts are provided by A218 and D219. D219 is a binding site for CDP. K220 provides a ligand contact to AMP. Residue K220 participates in ATP binding. Position 220 is an N6-(2-hydroxyisobutyryl)lysine (K220). An ADP-binding site is contributed by G238. G238 contributes to the CDP binding site. Residue G239 coordinates AMP. G239 is a binding site for ATP. An N6-acetyllysine mark is found at K267 and K291. G313 contributes to the AMP binding site. G313 provides a ligand contact to ATP. K323 is modified (N6-(2-hydroxyisobutyryl)lysine). The CDP site is built by G338, V340, and F343. F343 serves as a coordination point for ADP. E344 contacts AMP. ATP is bound at residue E344. K361 carries the N6-acetyllysine modification. ATP is bound by residues D375 and T376. Position 375 (D375) interacts with Mg(2+). The segment at 406–417 (KVLPGVDALSNV) is associated with globular domain 1.

It belongs to the phosphoglycerate kinase family. Monomer. Interacts with kinase MAPK1/ERK2; the interaction is direct, occurs under hypoxic conditions, and promotes its interaction with PIN1. Interacts with peptidyl-prolyl cis-trans isomerase PIN1; the interaction is direct, occurs under hypoxic conditions, and targets the protein to the mitochondrion by promoting interactions with the TOM complex. Interacts with mitochondrial circRNA mcPGK1 (via its 2nd stem-loop); the interaction is direct and targets the protein to the mitochondrion by promoting interactions with the TOM complex. Interacts with pyruvate dehydrogenase kinase PDK1; the interaction is direct, occurs under hypoxic conditions and leads to PDK1-mediated inhibition of pyruvate dehydrogenase complex activity. It depends on Mg(2+) as a cofactor. Post-translationally, phosphorylated at Ser-203 by MAPK1/ERK2 under hypoxic conditions, which promotes its mitochondrial targeting.

It localises to the cytoplasm. Its subcellular location is the cytosol. The protein resides in the mitochondrion matrix. It catalyses the reaction (2R)-3-phosphoglycerate + ATP = (2R)-3-phospho-glyceroyl phosphate + ADP. It carries out the reaction L-seryl-[protein] + ATP = O-phospho-L-seryl-[protein] + ADP + H(+). It participates in carbohydrate degradation; glycolysis; pyruvate from D-glyceraldehyde 3-phosphate: step 2/5. In terms of biological role, catalyzes one of the two ATP producing reactions in the glycolytic pathway via the reversible conversion of 1,3-diphosphoglycerate to 3-phosphoglycerate. Both L- and D- forms of purine and pyrimidine nucleotides can be used as substrates, but the activity is much lower on pyrimidines. In addition to its role as a glycolytic enzyme, it seems that PGK-1 acts as a polymerase alpha cofactor protein (primer recognition protein). Acts as a protein kinase when localized to the mitochondrion where it phosphorylates pyruvate dehydrogenase kinase PDK1 to inhibit pyruvate dehydrogenase complex activity and suppress the formation of acetyl-coenzyme A from pyruvate, and consequently inhibit oxidative phosphorylation and promote glycolysis. May play a role in sperm motility. The protein is Phosphoglycerate kinase 1 (PGK1) of Equus caballus (Horse).